We begin with the raw amino-acid sequence, 310 residues long: uncharacterized protein (310 aa).

Residues 1 to 70 form a disordered region; the sequence is MAGNSQRRGA…ARGRTDETET (70 aa). Over residues 49–62 the composition is skewed to basic residues; sequence AAKRAKAQQRRPAR. The S-adenosyl-L-methionine site is built by Gly-262, Val-282, and Leu-291.

This sequence belongs to the class IV-like SAM-binding methyltransferase superfamily. RNA methyltransferase TrmH family.

This is an uncharacterized protein from Mycobacterium marinum (strain ATCC BAA-535 / M).